Here is a 1207-residue protein sequence, read N- to C-terminus: DNA-directed RNA polymerase subunit beta' (1207 aa).

Zn(2+) is bound by residues Cys60, Cys62, Cys75, and Cys78. Mg(2+) is bound by residues Asp450, Asp452, and Asp454. Cys818, Cys892, Cys899, and Cys902 together coordinate Zn(2+).

The protein belongs to the RNA polymerase beta' chain family. As to quaternary structure, the RNAP catalytic core consists of 2 alpha, 1 beta, 1 beta' and 1 omega subunit. When a sigma factor is associated with the core the holoenzyme is formed, which can initiate transcription. Requires Mg(2+) as cofactor. Zn(2+) serves as cofactor.

It catalyses the reaction RNA(n) + a ribonucleoside 5'-triphosphate = RNA(n+1) + diphosphate. In terms of biological role, DNA-dependent RNA polymerase catalyzes the transcription of DNA into RNA using the four ribonucleoside triphosphates as substrates. The chain is DNA-directed RNA polymerase subunit beta' from Lactococcus lactis subsp. cremoris (strain SK11).